The sequence spans 440 residues: MSEFSQTVPELVAWARKNDFSISLPVDRLSFLLAVATLNGERLDGEMSEGELVDAFRHVSDAFEQTSETIGVRANNAINDMVRQRLLNRFTSEQAEGNAIYRLTPLGIGITDYYIRQREFSTLRLSMQLSIVAGELKRAADAAAEGGDEFHWHRNVYAPLKYSVAEIFDSIDLTQRIMDEQQQQVKDDIAQLLNKDWRAAISSCELLLSETSGTLRELQDTLEAAGDKLQANLLRIQDATMTHDDLHFVDRLVFDLQSKLDRIISWGQQSIDLWIGYDRHVHKFIRTAIDMDKNRIFAQRLRQSVQTYFDDPWALTYANADRLLDMRDEEMALRDDEVTGELPPDLEYEEFNEIREQLAAIIEEQLAIYKTRQTPLDLGLVVREYLAQYPRARHFDVARIVIDQAVRLGVAQADFTGLPAKWQPINDYGAKVQAHVIDKY.

Residues 208 to 236 form a leucine-zipper region; that stretch reads LSETSGTLRELQDTLEAAGDKLQANLLRI.

The protein belongs to the MukF family. In terms of assembly, interacts, and probably forms a ternary complex, with MukE and MukB via its C-terminal region. The complex formation is stimulated by calcium or magnesium. It is required for an interaction between MukE and MukB.

The protein localises to the cytoplasm. Its subcellular location is the nucleoid. In terms of biological role, involved in chromosome condensation, segregation and cell cycle progression. May participate in facilitating chromosome segregation by condensation DNA from both sides of a centrally located replisome during cell division. Not required for mini-F plasmid partitioning. Probably acts via its interaction with MukB and MukE. Overexpression results in anucleate cells. It has a calcium binding activity. In Salmonella typhi, this protein is Chromosome partition protein MukF.